We begin with the raw amino-acid sequence, 172 residues long: uncharacterized protein (172 aa).

Belongs to the baculoviridae 19 kDa protein family.

This is an uncharacterized protein from Orgyia pseudotsugata multicapsid polyhedrosis virus (OpMNPV).